A 527-amino-acid polypeptide reads, in one-letter code: Serine/threonine-protein kinase NLK (527 aa).

Sufficient for interaction with DAPK3 stretches follow at residues 1–125 (MSLC…KAHH) and 124–416 (HHHQ…SKRI). Required for interaction with TAB2 stretches follow at residues 1–304 (MSLC…VVTQ) and 434–527 (YHTC…LVWE). Disordered regions lie at residues 22 to 72 (AAAA…SSAA) and 90 to 140 (QQPY…DIEP). The span at 26–54 (GHHHHHHHHLPHLPPPHLHHHHHPQHHLH) shows a compositional bias: basic residues. The span at 103–119 (PGPAAAAPAQVQAAAAA) shows a compositional bias: low complexity. Residues 122-131 (KAHHHQHSHH) are compositionally biased toward basic residues. One can recognise a Protein kinase domain in the interval 138–427 (IEPDRPIGYG…AKDALAHPYL (290 aa)). ATP is bound by residues 144 to 152 (IGYGAFGVV) and lysine 167. The Proton acceptor role is filled by aspartate 264. Threonine 298 is subject to Phosphothreonine; by autocatalysis. The TQE signature appears at 298–300 (TQE). The interval 428 to 527 (DEGRLRYHTC…EMPPSPLVWE (100 aa)) is required for homodimerization and kinase activation and localization to the nucleus. Serine 522 bears the Phosphoserine mark.

Belongs to the protein kinase superfamily. CMGC Ser/Thr protein kinase family. MAP kinase subfamily. As to quaternary structure, homodimer. Homodimerization is required for intermolecular autophosphorylation, kinase activation and nuclear localization. May interact with components of cullin-RING-based SCF (SKP1-CUL1-F-box protein) E3 ubiquitin-protein ligase complexes. Interacts with LEF1, MEF2A, MYBL1 and MYBL2. Interacts with the upstream activating kinases HIPK2 and MAP3K7/TAK1. Interaction with MAP3K7/TAK1 seems to be indirect, and may be mediated by other proteins such as STAT3, TAB1 and TAB2. Interacts with and phosphorylates a number of transcription factors including FOXO1, FOXO3, FOXO4, MYB, NOTCH1 and TCF7L2/TCF4. Interacts with DAPK3/ZIPK, and this interaction may disrupt interaction with transcription factors such as TCF7L2/TCF4. Interacts with RNF138/NARF. Interacts with ATF5; the interaction stabilizes ATF5 at the protein level in a kinase-independent manner. The cofactor is Mg(2+). Post-translationally, phosphorylated on Thr-298. Intermolecular autophosphorylation on Thr-298 activates the enzyme.

The protein resides in the nucleus. It localises to the cytoplasm. It carries out the reaction L-seryl-[protein] + ATP = O-phospho-L-seryl-[protein] + ADP + H(+). The catalysed reaction is L-threonyl-[protein] + ATP = O-phospho-L-threonyl-[protein] + ADP + H(+). With respect to regulation, activated by dimerization and subsequent intermolecular autophosphorylation on Thr-298. Activated by the non-canonical Wnt signaling pathway, in which WNT5A treatment leads to activation of MAP3K7/TAK1 and HIPK2, which subsequently phosphorylates and activates this protein. Other cytokines such as IL6 may also activate this regulatory circuit. Functionally, serine/threonine-protein kinase that regulates a number of transcription factors with key roles in cell fate determination. Positive effector of the non-canonical Wnt signaling pathway, acting downstream of WNT5A, MAP3K7/TAK1 and HIPK2. Negative regulator of the canonical Wnt/beta-catenin signaling pathway. Binds to and phosphorylates TCF7L2/TCF4 and LEF1, promoting the dissociation of the TCF7L2/LEF1/beta-catenin complex from DNA, as well as the ubiquitination and subsequent proteolysis of LEF1. Together these effects inhibit the transcriptional activation of canonical Wnt/beta-catenin target genes. Negative regulator of the Notch signaling pathway. Binds to and phosphorylates NOTCH1, thereby preventing the formation of a transcriptionally active ternary complex of NOTCH1, RBPJ/RBPSUH and MAML1. Negative regulator of the MYB family of transcription factors. Phosphorylation of MYB leads to its subsequent proteolysis while phosphorylation of MYBL1 and MYBL2 inhibits their interaction with the coactivator CREBBP. Other transcription factors may also be inhibited by direct phosphorylation of CREBBP itself. Acts downstream of IL6 and MAP3K7/TAK1 to phosphorylate STAT3, which is in turn required for activation of NLK by MAP3K7/TAK1. Upon IL1B stimulus, cooperates with ATF5 to activate the transactivation activity of C/EBP subfamily members. Phosphorylates ATF5 but also stabilizes ATF5 protein levels in a kinase-independent manner. Acts as an inhibitor of the mTORC1 complex in response to osmotic stress by mediating phosphorylation of RPTOR, thereby preventing recruitment of the mTORC1 complex to lysosomes. This Homo sapiens (Human) protein is Serine/threonine-protein kinase NLK (NLK).